The sequence spans 296 residues: Lipoyl synthase (296 aa).

Positions 37, 42, 48, 63, 67, 70, and 276 each coordinate [4Fe-4S] cluster. Positions 49–265 (WSKKHTTVMI…ERVAKTKGFL (217 aa)) constitute a Radical SAM core domain.

The protein belongs to the radical SAM superfamily. Lipoyl synthase family. [4Fe-4S] cluster serves as cofactor.

It is found in the cytoplasm. The catalysed reaction is [[Fe-S] cluster scaffold protein carrying a second [4Fe-4S](2+) cluster] + N(6)-octanoyl-L-lysyl-[protein] + 2 oxidized [2Fe-2S]-[ferredoxin] + 2 S-adenosyl-L-methionine + 4 H(+) = [[Fe-S] cluster scaffold protein] + N(6)-[(R)-dihydrolipoyl]-L-lysyl-[protein] + 4 Fe(3+) + 2 hydrogen sulfide + 2 5'-deoxyadenosine + 2 L-methionine + 2 reduced [2Fe-2S]-[ferredoxin]. Its pathway is protein modification; protein lipoylation via endogenous pathway; protein N(6)-(lipoyl)lysine from octanoyl-[acyl-carrier-protein]: step 2/2. In terms of biological role, catalyzes the radical-mediated insertion of two sulfur atoms into the C-6 and C-8 positions of the octanoyl moiety bound to the lipoyl domains of lipoate-dependent enzymes, thereby converting the octanoylated domains into lipoylated derivatives. The polypeptide is Lipoyl synthase (Rickettsia massiliae (strain Mtu5)).